Consider the following 610-residue polypeptide: Elongation factor 4 (610 aa).

A tr-type G domain is found at 14–196; that stretch reads NRIRNFSIIA…ALVANIPPPK (183 aa). GTP contacts are provided by residues 26–31 and 143–146; these read DHGKST and NKID.

The protein belongs to the TRAFAC class translation factor GTPase superfamily. Classic translation factor GTPase family. LepA subfamily.

It is found in the cell inner membrane. It carries out the reaction GTP + H2O = GDP + phosphate + H(+). In terms of biological role, required for accurate and efficient protein synthesis under certain stress conditions. May act as a fidelity factor of the translation reaction, by catalyzing a one-codon backward translocation of tRNAs on improperly translocated ribosomes. Back-translocation proceeds from a post-translocation (POST) complex to a pre-translocation (PRE) complex, thus giving elongation factor G a second chance to translocate the tRNAs correctly. Binds to ribosomes in a GTP-dependent manner. This is Elongation factor 4 from Legionella pneumophila (strain Paris).